We begin with the raw amino-acid sequence, 283 residues long: 2-dehydro-3-deoxyphosphooctonate aldolase (283 aa).

Belongs to the KdsA family.

The protein resides in the cytoplasm. The catalysed reaction is D-arabinose 5-phosphate + phosphoenolpyruvate + H2O = 3-deoxy-alpha-D-manno-2-octulosonate-8-phosphate + phosphate. The protein operates within carbohydrate biosynthesis; 3-deoxy-D-manno-octulosonate biosynthesis; 3-deoxy-D-manno-octulosonate from D-ribulose 5-phosphate: step 2/3. It functions in the pathway bacterial outer membrane biogenesis; lipopolysaccharide biosynthesis. In Shewanella frigidimarina (strain NCIMB 400), this protein is 2-dehydro-3-deoxyphosphooctonate aldolase.